The following is a 455-amino-acid chain: Ribulose bisphosphate carboxylase large chain (455 aa).

N6,N6,N6-trimethyllysine is present on lysine 5. The substrate site is built by asparagine 114 and threonine 164. Catalysis depends on lysine 166, which acts as the Proton acceptor. Lysine 168 provides a ligand contact to substrate. Mg(2+)-binding residues include lysine 192, aspartate 194, and glutamate 195. Lysine 192 carries the N6-carboxylysine modification. Residue histidine 285 is the Proton acceptor of the active site. Arginine 286, histidine 318, and serine 370 together coordinate substrate.

It belongs to the RuBisCO large chain family. Type I subfamily. As to quaternary structure, heterohexadecamer of 8 large chains and 8 small chains; disulfide-linked. The disulfide link is formed within the large subunit homodimers. Mg(2+) is required as a cofactor. In terms of processing, the disulfide bond which can form in the large chain dimeric partners within the hexadecamer appears to be associated with oxidative stress and protein turnover.

It is found in the plastid. The protein resides in the chloroplast. It catalyses the reaction 2 (2R)-3-phosphoglycerate + 2 H(+) = D-ribulose 1,5-bisphosphate + CO2 + H2O. It carries out the reaction D-ribulose 1,5-bisphosphate + O2 = 2-phosphoglycolate + (2R)-3-phosphoglycerate + 2 H(+). Functionally, ruBisCO catalyzes two reactions: the carboxylation of D-ribulose 1,5-bisphosphate, the primary event in carbon dioxide fixation, as well as the oxidative fragmentation of the pentose substrate in the photorespiration process. Both reactions occur simultaneously and in competition at the same active site. In Lupinus microcarpus (Chick lupine), this protein is Ribulose bisphosphate carboxylase large chain.